The chain runs to 209 residues: Orotate phosphoribosyltransferase (209 aa).

5-phospho-alpha-D-ribose 1-diphosphate is bound by residues Arg96, Lys100, His102, and 122 to 130 (EDLISTGGS). Residue Ser126 coordinates orotate.

It belongs to the purine/pyrimidine phosphoribosyltransferase family. PyrE subfamily. In terms of assembly, homodimer. The cofactor is Mg(2+).

It catalyses the reaction orotidine 5'-phosphate + diphosphate = orotate + 5-phospho-alpha-D-ribose 1-diphosphate. It functions in the pathway pyrimidine metabolism; UMP biosynthesis via de novo pathway; UMP from orotate: step 1/2. Its function is as follows. Catalyzes the transfer of a ribosyl phosphate group from 5-phosphoribose 1-diphosphate to orotate, leading to the formation of orotidine monophosphate (OMP). The polypeptide is Orotate phosphoribosyltransferase (Streptococcus pyogenes serotype M2 (strain MGAS10270)).